A 526-amino-acid chain; its full sequence is MAAIVAALRGSSGRFRPQTRVLTRGTRGAAGAASAAGGQQNFDLLVIGGGSGGLACAKEAAQLGRKVAVADYVEPSPRGTKWGLGGTCVNVGCIPKKLMHQAALLGGMIRDAQHYGWEVAQPVQHNWKAMAEAVQNHVKSLNWGHRVQLQDRKVKYFNIKASFVNEHTVHGVDKAGKVTQLSAKHIVIATGGRPKYPTQVKGALEHGITSDDIFWLKESPGKTLVVGASYVALECAGFLTGIGLDTTVMMRSVPLRGFDQQMASLVTEHMESHGTRFLKGCVPSLIRKLPTNQLQVTWEDLASGKEDVGTFDTVLWAIGRVPETRNLNLEKAGVNTNPKNQKIIVDAQEATSVPHIYAIGDVAEGRPELTPTAIKAGKLLAQRLFGKSSTLMNYSNVPTTVFTPLEYGCVGLSEEEAVALHGQEHIEVYHAYYKPLEFTVADRDASQCYIKMVCMREPPQLVLGLHFLGPNAGEVTQGFALGIQCGASYAQVMQTVGIHPTCSEEVVKLHISKRSGLDPTVTGCUG.

A mitochondrion-targeting transit peptide spans 1-36; it reads MAAIVAALRGSSGRFRPQTRVLTRGTRGAAGAASAA. Residue 43–72 participates in FAD binding; it reads DLLVIGGGSGGLACAKEAAQLGRKVAVADY. Lys81 bears the N6-succinyllysine mark. A disulfide bond links Cys88 and Cys93. 2 positions are modified to N6-succinyllysine: Lys177 and Lys331. The active-site Proton acceptor is the His499. The cysteinyl-selenocysteine (Cys-Sec) cross-link spans 524–525; it reads CU. A non-standard amino acid (selenocysteine) is located at residue Sec525.

The protein belongs to the class-I pyridine nucleotide-disulfide oxidoreductase family. As to quaternary structure, homodimer. FAD is required as a cofactor. In terms of tissue distribution, expressed in liver, kidney, adrenal gland and heart.

It is found in the mitochondrion. The enzyme catalyses [thioredoxin]-dithiol + NADP(+) = [thioredoxin]-disulfide + NADPH + H(+). In terms of biological role, involved in the control of reactive oxygen species levels and the regulation of mitochondrial redox homeostasis. Maintains mitochondrial thioredoxin in a reduced state. May play a role in redox-regulated cell signaling. The chain is Thioredoxin reductase 2, mitochondrial (Txnrd2) from Rattus norvegicus (Rat).